Here is a 251-residue protein sequence, read N- to C-terminus: ATP synthase subunit a (251 aa).

7 consecutive transmembrane segments (helical) span residues 29-49 (FTQSALYMFAAVGIIALITLV), 56-73 (LVPGRMQSLAEAFYEFIA), 87-107 (FVPLVFSLFMFVLVLNLFGMI), 117-137 (IIVTFMLALVVILTVVIYGFM), 159-181 (LIVAIEVVSFISRPISLSVRLFA), 192-212 (IFAGFVPALLAAGIWGILSPL), and 218-238 (VAITALEMLVAVLQAYVFATL).

This sequence belongs to the ATPase A chain family. As to quaternary structure, F-type ATPases have 2 components, CF(1) - the catalytic core - and CF(0) - the membrane proton channel. CF(1) has five subunits: alpha(3), beta(3), gamma(1), delta(1), epsilon(1). CF(0) has three main subunits: a(1), b(2) and c(9-12). The alpha and beta chains form an alternating ring which encloses part of the gamma chain. CF(1) is attached to CF(0) by a central stalk formed by the gamma and epsilon chains, while a peripheral stalk is formed by the delta and b chains.

It is found in the cell inner membrane. Functionally, key component of the proton channel; it plays a direct role in the translocation of protons across the membrane. The polypeptide is ATP synthase subunit a (Methylobacterium sp. (strain 4-46)).